Consider the following 678-residue polypeptide: Glutamate--cysteine ligase (678 aa).

Belongs to the glutamate--cysteine ligase type 3 family.

It catalyses the reaction L-cysteine + L-glutamate + ATP = gamma-L-glutamyl-L-cysteine + ADP + phosphate + H(+). The protein operates within sulfur metabolism; glutathione biosynthesis; glutathione from L-cysteine and L-glutamate: step 1/2. Feedback inhibition by glutathione. Catalyzes the ATP-dependent condensation of cysteine and glutamate to form the dipeptide gamma-glutamylcysteine (gamma-GC), the first and rate-limiting step in the production of glutathione (GSH). The sequence is that of Glutamate--cysteine ligase (GSH1) from Saccharomyces cerevisiae (strain ATCC 204508 / S288c) (Baker's yeast).